Here is a 291-residue protein sequence, read N- to C-terminus: Transmembrane protein 41B (291 aa).

The disordered stretch occupies residues 1-38 (MAKGRVAERSQMGADHTTPVGDGAAGTRGPAAPGSRDY). Thr18 bears the Phosphothreonine mark. Low complexity predominate over residues 21–34 (GDGAAGTRGPAAPG). A Phosphoserine modification is found at Ser35. The next 6 helical transmembrane spans lie at 52 to 72 (MSLLILVSIFLSAAFVMFLVY), 109 to 129 (FYVQVLVAYFATYIFLQTFAI), 147 to 169 (LALFLVCLCSGLGASFCYMLSYL), 197 to 217 (LINYIIFLRITPFLPNWFINI), 225 to 245 (PLKVFFIGTFLGVAPPSFVAI), and 262 to 282 (SWNSIFILMILAVLSILPAIF). Residues 140 to 251 (GFLYPFPLAL…FVAIKAGTTL (112 aa)) form a VTT domain; required for its function in autophagy region.

The protein belongs to the TMEM41 family. In terms of assembly, interacts with VMP1. Interacts with COPA, COPB1, VDAC1 and ERLIN2. Interacts with ATG2A. Interacts with SURF4.

It localises to the endoplasmic reticulum membrane. Its subcellular location is the endomembrane system. The enzyme catalyses a 1,2-diacyl-sn-glycero-3-phospho-L-serine(in) = a 1,2-diacyl-sn-glycero-3-phospho-L-serine(out). The catalysed reaction is cholesterol(in) = cholesterol(out). It carries out the reaction a 1,2-diacyl-sn-glycero-3-phosphocholine(in) = a 1,2-diacyl-sn-glycero-3-phosphocholine(out). It catalyses the reaction a 1,2-diacyl-sn-glycero-3-phosphoethanolamine(in) = a 1,2-diacyl-sn-glycero-3-phosphoethanolamine(out). Phospholipid scramblase involved in lipid homeostasis and membrane dynamics processes. Has phospholipid scramblase activity toward cholesterol and phosphatidylserine, as well as phosphatidylethanolamine and phosphatidylcholine. Required for autophagosome formation: participates in early stages of autophagosome biogenesis at the endoplasmic reticulum (ER) membrane by reequilibrating the leaflets of the ER as lipids are extracted by ATG2 (ATG2A or ATG2B) to mediate autophagosome assembly. In addition to autophagy, involved in other processes in which phospholipid scramblase activity is required. Required for normal motor neuron development. The chain is Transmembrane protein 41B from Pongo abelii (Sumatran orangutan).